The following is a 106-amino-acid chain: Protein S40-3 (106 aa).

The disordered stretch occupies residues 1 to 65; it reads MSEEFQESEV…TEEEGEMTPP (65 aa). Positions 16-41 are enriched in basic and acidic residues; the sequence is SFTRKDNKISHNNENYERKSTEKDKI.

Belongs to the senescence regulator S40 family.

It is found in the nucleus. In terms of biological role, regulates senescence either by modulating WRKY53 or by activating SAG12. Affects the natural variation of cyst nematodes sex ratio and susceptibility to parasitic nematodes, depending on single nucleotide polymorphism (SNPs) between cultivars. This chain is Protein S40-3, found in Arabidopsis thaliana (Mouse-ear cress).